A 226-amino-acid chain; its full sequence is UPF0319 protein YpAngola_A3206 (226 aa).

The signal sequence occupies residues 1-20 (MKLGLVAGMLAVCFSFSSVA).

The protein belongs to the UPF0319 family.

This is UPF0319 protein YpAngola_A3206 from Yersinia pestis bv. Antiqua (strain Angola).